The following is a 120-amino-acid chain: Galanin-like peptide (120 aa).

A signal peptide spans Met-1–Ser-22. Residues Ser-85 to Ile-120 constitute a propeptide that is removed on maturation.

Belongs to the galanin family.

Its subcellular location is the secreted. Functionally, hypothalamic neuropeptide which binds to the G-protein-coupled galanin receptors (GALR1, GALR2 and GALR3). Involved in a large number of putative physiological functions in CNS homeostatic processes, including the regulation of gonadotropin-releasing hormone secretion. The protein is Galanin-like peptide (GALP) of Sus scrofa (Pig).